The following is a 262-amino-acid chain: Indole-3-glycerol phosphate synthase (262 aa).

The protein belongs to the TrpC family.

It carries out the reaction 1-(2-carboxyphenylamino)-1-deoxy-D-ribulose 5-phosphate + H(+) = (1S,2R)-1-C-(indol-3-yl)glycerol 3-phosphate + CO2 + H2O. It participates in amino-acid biosynthesis; L-tryptophan biosynthesis; L-tryptophan from chorismate: step 4/5. This is Indole-3-glycerol phosphate synthase from Chlorobium luteolum (strain DSM 273 / BCRC 81028 / 2530) (Pelodictyon luteolum).